Reading from the N-terminus, the 255-residue chain is 5'-nucleotidase SurE (255 aa).

Asp8, Asp9, Ser40, and Asn93 together coordinate a divalent metal cation.

It belongs to the SurE nucleotidase family. It depends on a divalent metal cation as a cofactor.

It is found in the cytoplasm. The catalysed reaction is a ribonucleoside 5'-phosphate + H2O = a ribonucleoside + phosphate. Its function is as follows. Nucleotidase that shows phosphatase activity on nucleoside 5'-monophosphates. The sequence is that of 5'-nucleotidase SurE from Bradyrhizobium sp. (strain BTAi1 / ATCC BAA-1182).